We begin with the raw amino-acid sequence, 605 residues long: Alanine--tRNA ligase (605 aa).

Zn(2+) contacts are provided by H463, H467, C565, and H569.

This sequence belongs to the class-II aminoacyl-tRNA synthetase family. It depends on Zn(2+) as a cofactor.

It localises to the cytoplasm. It carries out the reaction tRNA(Ala) + L-alanine + ATP = L-alanyl-tRNA(Ala) + AMP + diphosphate. Functionally, catalyzes the attachment of alanine to tRNA(Ala) in a two-step reaction: alanine is first activated by ATP to form Ala-AMP and then transferred to the acceptor end of tRNA(Ala). Also edits incorrectly charged Ser-tRNA(Ala) and Gly-tRNA(Ala) via its editing domain. This is Alanine--tRNA ligase (alaS) from Treponema pallidum (strain Nichols).